Here is an 84-residue protein sequence, read N- to C-terminus: Omega-theraphotoxin-Pm1a (84 aa).

The N-terminal stretch at 1–21 (MKTSMLAVFVALPLAFVLTAA) is a signal peptide. Residues 22 to 45 (TEERAHPNELVNSLVELVKLDAER) constitute a propeptide that is removed on maturation. 3 cysteine pairs are disulfide-bonded: Cys52–Cys66, Cys59–Cys71, and Cys65–Cys78.

Belongs to the neurotoxin 10 (Hwtx-1) family. 41 (Jztx-36) subfamily. In terms of tissue distribution, expressed by the venom gland.

The protein localises to the secreted. Functionally, omega-conotoxins act at presynaptic membranes, they bind and block voltage-gated calcium channels (Cav). This toxin inhibits barium currents (IBa) mediated by L-type voltage-gated calcium channels Cav1.2/CACNA1C (IC(50)=825 nM) and Cav1.3/CACNA1C (IC(50)=2240 nM). The protein is Omega-theraphotoxin-Pm1a of Pelinobius muticus (King baboon spider).